A 136-amino-acid polypeptide reads, in one-letter code: NHL-repeat-containing protein 4 (136 aa).

2 NHL repeats span residues 48 to 91 (QPLG…FPRV) and 93 to 132 (PPICLQLEGLKRPLGMACAPQGQLVVADAGDNCIKLYQYL).

This chain is NHL-repeat-containing protein 4 (Nhlrc4), found in Mus musculus (Mouse).